The following is a 555-amino-acid chain: Glutamate--tRNA ligase (555 aa).

Residues 100–110 carry the 'HIGH' region motif; it reads PNPSGPLHIGH.

This sequence belongs to the class-I aminoacyl-tRNA synthetase family. Glutamate--tRNA ligase type 2 subfamily.

The protein localises to the cytoplasm. It catalyses the reaction tRNA(Glu) + L-glutamate + ATP = L-glutamyl-tRNA(Glu) + AMP + diphosphate. Its function is as follows. Catalyzes the attachment of glutamate to tRNA(Glu) in a two-step reaction: glutamate is first activated by ATP to form Glu-AMP and then transferred to the acceptor end of tRNA(Glu). This chain is Glutamate--tRNA ligase, found in Methanococcus maripaludis (strain C5 / ATCC BAA-1333).